We begin with the raw amino-acid sequence, 1288 residues long: Disease resistance protein RRS1 (1288 aa).

One can recognise a TIR domain in the interval 5–146 (EKDEEFVCIS…EIVRDVYETH (142 aa)). The tract at residues 25-26 (SH) is important for interaction with RPS4. An NB-ARC domain is found at 170–421 (IGIRCVGIWG…LLEGCGFFPH (252 aa)). Residue 179-186 (GMPGIGKT) participates in ATP binding. LRR repeat units lie at residues 498-522 (SEEI…AFKN), 535-553 (NPEV…HSLP), 554-575 (NELR…NFDP), 577-598 (HLVE…TKNL), 621-646 (AENL…RLLR), 665-688 (PPNI…TVKP), 697-720 (LTEI…NSSC), 740-764 (LPNM…SIQG), 766-791 (PRFL…SLEI), 792-807 (LNAH…NMAN), 808-829 (LEFL…QGFP), and 830-852 (RNLK…PLSL). The Nuclear localization signal motif lies at 986 to 1003 (RKFHCWAPWQVVPKVRKD). Residues 1202 to 1270 (IPAIDEGDLW…YLSEHNHPRP (69 aa)) constitute a DNA-binding region (WRKY). Positions 1267–1288 (HPRPTKRKALADSTRSTSSSIC) are disordered. A compositionally biased stretch (polar residues) spans 1279–1288 (STRSTSSSIC).

This sequence belongs to the disease resistance TIR-NB-LRR family. As to quaternary structure, interacts with PopP2, a R.solanacearum type III effector. Interacts with RPS4.

The protein localises to the nucleus. Its subcellular location is the cytoplasm. Transcription factor. Interacts specifically with the W box (5'-(T)TGAC[CT]-3'), a frequently occurring elicitor-responsive cis-acting element. Also acts as a disease resistance protein involved in resistance to fungal and bacterial pathogens, including R.solanacearum, P.syringae pv. tomato and C.higginsianum. Heterodimerization with RPS4 is required to form a functional complex to recognize AvrRps4 and PopP2. Contributes to temperature-conditioned RPS4 auto-immunity. The polypeptide is Disease resistance protein RRS1 (Arabidopsis thaliana (Mouse-ear cress)).